The chain runs to 336 residues: Probable allantoicase 2 (336 aa).

The protein belongs to the allantoicase family.

The catalysed reaction is allantoate + H2O = (S)-ureidoglycolate + urea. The protein operates within nitrogen metabolism; (S)-allantoin degradation; (S)-ureidoglycolate from allantoate (aminidohydrolase route): step 1/1. The protein is Probable allantoicase 2 of Burkholderia mallei (strain ATCC 23344).